The following is a 143-amino-acid chain: Small ribosomal subunit protein eS19B (143 aa).

The protein belongs to the eukaryotic ribosomal protein eS19 family. In terms of assembly, component of the small ribosomal subunit (SSU). Mature yeast ribosomes consist of a small (40S) and a large (60S) subunit. The 40S small subunit contains 1 molecule of ribosomal RNA (18S rRNA) and at least 33 different proteins. The large 60S subunit contains 3 rRNA molecules (25S, 5.8S and 5S rRNA) and at least 46 different proteins.

The protein localises to the cytoplasm. It is found in the nucleus. Component of the ribosome, a large ribonucleoprotein complex responsible for the synthesis of proteins in the cell. The small ribosomal subunit (SSU) binds messenger RNAs (mRNAs) and translates the encoded message by selecting cognate aminoacyl-transfer RNA (tRNA) molecules. The large subunit (LSU) contains the ribosomal catalytic site termed the peptidyl transferase center (PTC), which catalyzes the formation of peptide bonds, thereby polymerizing the amino acids delivered by tRNAs into a polypeptide chain. The nascent polypeptides leave the ribosome through a tunnel in the LSU and interact with protein factors that function in enzymatic processing, targeting, and the membrane insertion of nascent chains at the exit of the ribosomal tunnel. eS19 is required for proper maturation of the small (40S) ribosomal subunit. Binds to 40S pre-ribosomal particles, probably required after association of NOC4 but before association of ENP1, TSR1 and RIO2 with 20/21S pre-rRNA. This is Small ribosomal subunit protein eS19B (rps1902) from Schizosaccharomyces pombe (strain 972 / ATCC 24843) (Fission yeast).